Reading from the N-terminus, the 350-residue chain is MAAAAMATVAVPRVKLGSQGMEVSAQGLGCMGMCPAFEPPKPEADMVALIRHAIAAGVTFFDTSDLYGPHTNEVLLGKALQGGGVRDRVELATKFGKFFAGGKPGIRGDPAYVRAACEGSLRRLGVDCIDLYYQHRVDKKVPIEVTIGELKKLVEEGKIRYIGLCEASASTIRRAHAVHPITAVQLEWSLWSRDVEEDIVPTCRELGIGIVAYSPLGKGFFSSGAKLVDSLPDHDFRKLIPRFQPGNIEKNAEIFERVNEMAARKGCTPSQLALAWIHHQGRDVCPIPGTTKIENFNQNVAALSVKLTPAEMAELESYASNVHGDRYPLMMANTTWQDSETPPLSSWKSE.

The Proton donor role is filled by Y67. A substrate-binding site is contributed by H135. 214 to 224 is a binding site for NADP(+); sequence SPLGKGFFSSG.

The protein belongs to the aldo/keto reductase family.

This chain is Probable aldo-keto reductase 1, found in Oryza sativa subsp. indica (Rice).